We begin with the raw amino-acid sequence, 145 residues long: Pseudoazurin (145 aa).

An N-terminal signal peptide occupies residues 1 to 22; it reads MFHHSLAAAAAALLALAAPGFA. Residues 27-115 enclose the Plastocyanin-like domain; the sequence is VHMLNKGESG…MGMVGLVQVG (89 aa). Residues histidine 62, cysteine 100, histidine 103, and methionine 108 each coordinate Cu cation. The segment at 126 to 145 is disordered; sequence TAKMPKKARERMDAELAQVN.

In terms of assembly, homodimer. Requires Cu cation as cofactor.

It is found in the periplasm. Functionally, this soluble electron transfer copper protein is required for the inactivation of copper-containing nitrite reductase in the presence of oxygen. This chain is Pseudoazurin (pazS), found in Paracoccus pantotrophus (Thiosphaera pantotropha).